Here is a 179-residue protein sequence, read N- to C-terminus: ATP-dependent protease subunit HslV (179 aa).

Threonine 8 is an active-site residue. The Na(+) site is built by serine 164, cysteine 167, and threonine 170.

This sequence belongs to the peptidase T1B family. HslV subfamily. In terms of assembly, a double ring-shaped homohexamer of HslV is capped on each side by a ring-shaped HslU homohexamer. The assembly of the HslU/HslV complex is dependent on binding of ATP.

It is found in the cytoplasm. It catalyses the reaction ATP-dependent cleavage of peptide bonds with broad specificity.. Its activity is regulated as follows. Allosterically activated by HslU binding. Protease subunit of a proteasome-like degradation complex believed to be a general protein degrading machinery. The protein is ATP-dependent protease subunit HslV of Staphylococcus carnosus (strain TM300).